We begin with the raw amino-acid sequence, 880 residues long: Alanine--tRNA ligase (880 aa).

Zn(2+) contacts are provided by histidine 565, histidine 569, cysteine 675, and histidine 679.

It belongs to the class-II aminoacyl-tRNA synthetase family. Zn(2+) is required as a cofactor.

It localises to the cytoplasm. It carries out the reaction tRNA(Ala) + L-alanine + ATP = L-alanyl-tRNA(Ala) + AMP + diphosphate. In terms of biological role, catalyzes the attachment of alanine to tRNA(Ala) in a two-step reaction: alanine is first activated by ATP to form Ala-AMP and then transferred to the acceptor end of tRNA(Ala). Also edits incorrectly charged Ser-tRNA(Ala) and Gly-tRNA(Ala) via its editing domain. This Granulibacter bethesdensis (strain ATCC BAA-1260 / CGDNIH1) protein is Alanine--tRNA ligase.